We begin with the raw amino-acid sequence, 535 residues long: Cytochrome P450 71C3 (535 aa).

The chain crosses the membrane as a helical span at residues 23-43 (QTLTLLLIAVPTVLLLLASLA). C475 is a heme binding site.

Belongs to the cytochrome P450 family. Requires heme as cofactor.

The protein localises to the membrane. The protein operates within secondary metabolite biosynthesis; 2,4-dihydroxy-1,4-benzoxazin-3-one biosynthesis; 2,4-dihydroxy-1,4-benzoxazin-3-one from indoleglycerol phosphate: step 5/5. Its function is as follows. Catalyzes the conversion of 2-hydroxy-1,4-benzoxazin-3-one (HBOA) to 2,4-dihydroxy-1,4-benzoxazin-3-one (DIBOA). This is Cytochrome P450 71C3 (CYP71C3) from Zea mays (Maize).